Here is a 94-residue protein sequence, read N- to C-terminus: Large ribosomal subunit protein uL23 (94 aa).

The protein belongs to the universal ribosomal protein uL23 family. In terms of assembly, part of the 50S ribosomal subunit. Contacts protein L29, and trigger factor when it is bound to the ribosome.

In terms of biological role, one of the early assembly proteins it binds 23S rRNA. One of the proteins that surrounds the polypeptide exit tunnel on the outside of the ribosome. Forms the main docking site for trigger factor binding to the ribosome. The sequence is that of Large ribosomal subunit protein uL23 from Dehalococcoides mccartyi (strain ATCC BAA-2266 / KCTC 15142 / 195) (Dehalococcoides ethenogenes (strain 195)).